The primary structure comprises 156 residues: Small ribosomal subunit protein uS7 (156 aa).

Belongs to the universal ribosomal protein uS7 family. In terms of assembly, part of the 30S ribosomal subunit. Contacts proteins S9 and S11.

Functionally, one of the primary rRNA binding proteins, it binds directly to 16S rRNA where it nucleates assembly of the head domain of the 30S subunit. Is located at the subunit interface close to the decoding center, probably blocks exit of the E-site tRNA. The polypeptide is Small ribosomal subunit protein uS7 (Synechococcus elongatus (strain ATCC 33912 / PCC 7942 / FACHB-805) (Anacystis nidulans R2)).